A 557-amino-acid polypeptide reads, in one-letter code: Vacuolar protein sorting-associated protein 30 (557 aa).

Disordered stretches follow at residues 93-149 and 218-238; these read DDDN…ENQQ and NKEISESNKEKQYSHNLSEKE. Over residues 135–147 the composition is skewed to acidic residues; it reads DEEEQEATDEDEN. Threonine 142 is modified (phosphothreonine). The stretch at 189–322 forms a coiled coil; sequence LINRLKSEYD…QLDKLRKINI (134 aa). Residues 320 to 539 form a BARA region; sequence INIFNATFKI…LAFSSNLLSK (220 aa). Residues 515-540 are required for membrane-association, autophagic function during starvation and normal autophagosome morphology; sequence WTTAMKFLLTNVKWLLAFSSNLLSKS.

It belongs to the beclin family. As to quaternary structure, component of the autophagy-specific VPS34 PI3-kinase complex I composed of VPS15, VPS30, VPS34, ATG14 and ATG38; and of the VPS34 PI3-kinase complex II composed of VPS15, VPS30, VPS34 and VPS38.

The protein resides in the endosome membrane. Its subcellular location is the vacuole membrane. It is found in the preautophagosomal structure membrane. Required for cytoplasm to vacuole transport (Cvt), autophagy, nucleophagy, and mitophagy, as a part of the autophagy-specific VPS34 PI3-kinase complex I. This complex is essential to recruit the ATG8-phosphatidylinositol conjugate and the ATG12-ATG5 conjugate to the pre-autophagosomal structure. Also involved in endosome-to-Golgi retrograde transport as part of the VPS34 PI3-kinase complex II. This second complex is required for the endosome-to-Golgi retrieval of PEP1 and KEX2, and the recruitment of VPS5 and VPS7, two components of the retromer complex, to endosomal membranes (probably through the synthesis of a specific pool of phosphatidylinositol 3-phosphate recruiting the retromer to the endosomes). Also plays a role in regulation of filamentous growth. This is Vacuolar protein sorting-associated protein 30 from Saccharomyces cerevisiae (strain ATCC 204508 / S288c) (Baker's yeast).